We begin with the raw amino-acid sequence, 600 residues long: Chaperone protein DnaK (600 aa).

Phosphothreonine; by autocatalysis is present on Thr-175. Positions 569-578 (SFAQATAQQA) are enriched in low complexity. A disordered region spans residues 569–600 (SFAQATAQQANTSESDPKADDSNTIDAEIKQD). A compositionally biased stretch (basic and acidic residues) spans 583 to 600 (SDPKADDSNTIDAEIKQD).

Belongs to the heat shock protein 70 family.

In terms of biological role, acts as a chaperone. The sequence is that of Chaperone protein DnaK from Mesomycoplasma hyopneumoniae (strain J / ATCC 25934 / NCTC 10110) (Mycoplasma hyopneumoniae).